Reading from the N-terminus, the 122-residue chain is Acidic phospholipase A2 5 (122 aa).

7 cysteine pairs are disulfide-bonded: Cys-26–Cys-115, Cys-28–Cys-44, Cys-43–Cys-95, Cys-49–Cys-122, Cys-50–Cys-88, Cys-57–Cys-81, and Cys-75–Cys-86. The Ca(2+) site is built by Phe-27, Gly-29, and Gly-31. His-47 is a catalytic residue. Asp-48 is a Ca(2+) binding site. Asp-89 is an active-site residue.

The protein belongs to the phospholipase A2 family. Group II subfamily. D49 sub-subfamily. Monomer (predominant). Non-covalently linked homodimers are also observed. The cofactor is Ca(2+). In terms of tissue distribution, expressed by the venom gland.

It is found in the secreted. It catalyses the reaction a 1,2-diacyl-sn-glycero-3-phosphocholine + H2O = a 1-acyl-sn-glycero-3-phosphocholine + a fatty acid + H(+). Preincubation with heparin slightly increase the enzymatic activity. Its function is as follows. Snake venom phospholipase A2 (PLA2) that inhibits platelet aggregation induced by ADP, arachidonic acid and PAF. Acts in a enzymatic independent manner on a proteinase-activated receptor (PAR1, F2R) to evoke calcium release through the inositol 1,4,5-trisphosphate receptor (ITPR1, IP3R) and induces mouse aorta contraction. PAR1, phospholipase C and IP3R inhibitors suppress PA2-induced aorta contraction. PLA2 catalyzes the calcium-dependent hydrolysis of the 2-acyl groups in 3-sn-phosphoglycerides. The sequence is that of Acidic phospholipase A2 5 from Trimeresurus stejnegeri (Chinese green tree viper).